Here is a 638-residue protein sequence, read N- to C-terminus: MNASEKFIAAKAHVDEAAVAPLPNSRKIHVEGSRPDIRVPMREISQADTPASMGAEPNPPIFVYDCSGPYTDPTAKIDIRSGLVALRQQWIEERGDTEVLADLSSEFGRSRAADKALDELRFPGLHRHPRRAKAGMNVSQMHYARRGLITPEMEYVAIRENMNRAAYVESLRTAGPTGEKMAKLLTRQHPGQSFGASIPEEITPEFVRSEVARGRAIIPNNINHPESEPMIIGRNFLVKINANIGNSALGSSISEEVDKMTWAIRWGGDTVMDLSTGKNIHETREWIIRNSPVPIGTVPIYQALEKVDGKAEELTWEIFRDTLIEQAEQGVDYFTIHAGVLLRYVPMTANRMTGIVSRGGSIMAKWCLAHHKESFLYTHFEDICDIMKAYDVAFSLGDGLRPGSIYDANDDAQLGELKTLGELTDIAWKHDVQTIIEGPGHVPMHLIKENMDLQLEHCKEAPFYTLGPLTTDIAPGYDHITSGIGAAQIGWYGTAMLCYVTPKEHLGLPNKQDVKEGIITYKLAAHAADLAKGHPGAQIRDNALSKARFEFRWEDQFNLGLDPDKAKEFHDETLPKDSAKVAHFCSMCGPHFCSMKITQDVRDFAAKEGLKEDEALAKGMEVKAVEFVKSGAEVYRQV.

Residues Asn-243, Met-272, Tyr-301, His-337, 357–359 (SRG), 398–401 (DGLR), and Glu-437 contribute to the substrate site. His-441 provides a ligand contact to Zn(2+). Tyr-464 is a binding site for substrate. His-505 lines the Zn(2+) pocket. [4Fe-4S] cluster-binding residues include Cys-585, Cys-588, and Cys-593.

It belongs to the ThiC family. Homodimer. Requires [4Fe-4S] cluster as cofactor.

It carries out the reaction 5-amino-1-(5-phospho-beta-D-ribosyl)imidazole + S-adenosyl-L-methionine = 4-amino-2-methyl-5-(phosphooxymethyl)pyrimidine + CO + 5'-deoxyadenosine + formate + L-methionine + 3 H(+). It participates in cofactor biosynthesis; thiamine diphosphate biosynthesis. Catalyzes the synthesis of the hydroxymethylpyrimidine phosphate (HMP-P) moiety of thiamine from aminoimidazole ribotide (AIR) in a radical S-adenosyl-L-methionine (SAM)-dependent reaction. The chain is Phosphomethylpyrimidine synthase from Aromatoleum aromaticum (strain DSM 19018 / LMG 30748 / EbN1) (Azoarcus sp. (strain EbN1)).